The following is a 177-amino-acid chain: Nucleoside triphosphate/diphosphate phosphatase (177 aa).

The active-site Proton donor is Arg-23. Mg(2+) contacts are provided by Asn-87, Asp-103, Asp-105, Asp-107, Asp-120, and Glu-123.

It belongs to the Ntdp family. Mg(2+) serves as cofactor.

It carries out the reaction a ribonucleoside 5'-triphosphate + H2O = a ribonucleoside 5'-diphosphate + phosphate + H(+). It catalyses the reaction a ribonucleoside 5'-diphosphate + H2O = a ribonucleoside 5'-phosphate + phosphate + H(+). Has nucleoside phosphatase activity towards nucleoside triphosphates and nucleoside diphosphates. The protein is Nucleoside triphosphate/diphosphate phosphatase of Enterococcus faecalis (strain ATCC 700802 / V583).